The primary structure comprises 290 residues: Inactive tau-tubulin kinase ttbk-6 (290 aa).

Residues 1 to 240 (MEDHVLKKLN…FWQVMENEKI (240 aa)) enclose the Protein kinase domain. Disordered regions lie at residues 244-263 (SKFDWENEEPDMSVPPAAWE) and 268-290 (RYFQSNPLEINGPPTPAEVDFVL).

The protein belongs to the protein kinase superfamily. CK1 Ser/Thr protein kinase family.

In Caenorhabditis elegans, this protein is Inactive tau-tubulin kinase ttbk-6.